The sequence spans 640 residues: Threonine--tRNA ligase (640 aa).

In terms of domain architecture, TGS spans Met-1–Thr-61. The interval Asp-242–Pro-533 is catalytic. Cys-333, His-384, and His-510 together coordinate Zn(2+).

It belongs to the class-II aminoacyl-tRNA synthetase family. As to quaternary structure, homodimer. It depends on Zn(2+) as a cofactor.

It is found in the cytoplasm. It carries out the reaction tRNA(Thr) + L-threonine + ATP = L-threonyl-tRNA(Thr) + AMP + diphosphate + H(+). In terms of biological role, catalyzes the attachment of threonine to tRNA(Thr) in a two-step reaction: L-threonine is first activated by ATP to form Thr-AMP and then transferred to the acceptor end of tRNA(Thr). Also edits incorrectly charged L-seryl-tRNA(Thr). The sequence is that of Threonine--tRNA ligase from Pseudomonas syringae pv. syringae (strain B728a).